The chain runs to 140 residues: Putative 6-pyruvoyl tetrahydrobiopterin synthase (140 aa).

A Zn(2+)-binding site is contributed by H19. The active-site Proton acceptor is the C38. The Zn(2+) site is built by H44 and H46. Residues H84 and E129 each act as charge relay system in the active site.

The protein belongs to the PTPS family. In terms of assembly, homohexamer formed of two homotrimers in a head to head fashion. Requires Zn(2+) as cofactor.

It catalyses the reaction 7,8-dihydroneopterin 3'-triphosphate = 6-pyruvoyl-5,6,7,8-tetrahydropterin + triphosphate + H(+). It functions in the pathway cofactor biosynthesis; tetrahydrobiopterin biosynthesis; tetrahydrobiopterin from 7,8-dihydroneopterin triphosphate: step 1/3. Its function is as follows. Involved in the biosynthesis of tetrahydrobiopterin, an essential cofactor of aromatic amino acid hydroxylases. Catalyzes the transformation of 7,8-dihydroneopterin triphosphate into 6-pyruvoyl tetrahydropterin. The sequence is that of Putative 6-pyruvoyl tetrahydrobiopterin synthase (ptps-1) from Caenorhabditis elegans.